Here is a 425-residue protein sequence, read N- to C-terminus: Adenylosuccinate synthetase (425 aa).

Residues 12 to 18 (GDEGKGK) and 40 to 42 (GHT) contribute to the GTP site. The Proton acceptor role is filled by Asp13. The Mg(2+) site is built by Asp13 and Gly40. IMP-binding positions include 13–16 (DEGK), 38–41 (NAGH), Thr130, Arg144, Gln225, Thr240, and Arg304. Residue His41 is the Proton donor of the active site. Residue 300–306 (ATTGRPR) participates in substrate binding. GTP-binding positions include Arg306, 332-334 (KLD), and 414-416 (SVG).

The protein belongs to the adenylosuccinate synthetase family. Homodimer. Mg(2+) is required as a cofactor.

Its subcellular location is the cytoplasm. The catalysed reaction is IMP + L-aspartate + GTP = N(6)-(1,2-dicarboxyethyl)-AMP + GDP + phosphate + 2 H(+). It participates in purine metabolism; AMP biosynthesis via de novo pathway; AMP from IMP: step 1/2. Functionally, plays an important role in the de novo pathway of purine nucleotide biosynthesis. Catalyzes the first committed step in the biosynthesis of AMP from IMP. In Desulfovibrio desulfuricans (strain ATCC 27774 / DSM 6949 / MB), this protein is Adenylosuccinate synthetase.